We begin with the raw amino-acid sequence, 224 residues long: MINCLIVDDDKKLLQYVSSHLERESIQTHTFTSGEASLDFLENKNVDIAIVDIMMSGMDGFELCQTLKDDYHIPVIMLTARDALSDKERAFLSGTDDYVTKPFEVKELLFRIKAVLRRYQINADNELQLGNLILNQSYMEITVGSKTMNLPNKEFQLLFLLASNPKHIFTRDDIIGKIWGFDYEGDDRTVDVHIKRLRQRLSKLKSSVSIQTVRGQGYRVDQNV.

In terms of domain architecture, Response regulatory spans 3–116; the sequence is NCLIVDDDKK…ELLFRIKAVL (114 aa). 4-aspartylphosphate is present on Asp52. A DNA-binding region (ompR/PhoB-type) is located at residues 124 to 222; that stretch reads DNELQLGNLI…VRGQGYRVDQ (99 aa).

In terms of processing, phosphorylated by HssS.

It localises to the cytoplasm. Its function is as follows. Member of the two-component regulatory system HssS/HssR involved in intracellular heme homeostasis and tempering of staphylococcal virulence. Phosphorylated HssR binds to a direct repeat sequence within hrtAB promoter and activates the expression of hrtAB, an efflux pump, in response to extracellular heme, hemin, hemoglobin or blood. In Staphylococcus epidermidis (strain ATCC 12228 / FDA PCI 1200), this protein is Heme response regulator HssR (hssR).